Here is a 184-residue protein sequence, read N- to C-terminus: Cobalamin adenosyltransferase (184 aa).

Residues 1–21 (MGNRLSKIATRTGDAGTTGLG) form a disordered region. ATP-binding positions include 10–13 (TRTG), 18–19 (TG), Lys-28, 130–134 (RRAER), and Asn-154.

This sequence belongs to the Cob(I)alamin adenosyltransferase family. Homotrimer.

It carries out the reaction 2 cob(II)alamin + AH2 + 2 ATP = 2 adenosylcob(III)alamin + 2 triphosphate + A + 2 H(+). Its activity is regulated as follows. Is potentially allosterically regulated by GTP/GDP, which enhances its affinity for AdoCbl by 5-fold. Binds cob(II)alamin weakly in the absence of ATP. The presence of ATP (but not GTP or GDP) increases the affinity of cob(II)alamin for the enzyme, and stoichiometric binding is observed. GTP blocks the transfer of cob(II)alamin to IcmF from ATR, thus averting its reconstitution with inactive cofactor. Its function is as follows. Adenosyltransferase that catalyzes the conversion of cob(II)alamin to adenosylcob(III)alamin (AdoCbl) in the presence of ATP and an electron donor. Acts as an accessory protein of IcmF that functions in cofactor repair, since IcmF is prone to inactivation during catalytic turnover due to the occasional loss of the 5'-deoxyadenosine moiety and formation of the inactive cob(II)alamin cofactor in its active site. Thus, receives and repairs the inactive cofactor, which is then reloaded onto IcmF in a GTPase-gated step. The chain is Cobalamin adenosyltransferase from Cupriavidus metallidurans (strain ATCC 43123 / DSM 2839 / NBRC 102507 / CH34) (Ralstonia metallidurans).